A 152-amino-acid chain; its full sequence is Prefoldin subunit alpha (152 aa).

The interval 110-152 is disordered; the sequence is ETQEEVDELESESQELEQQAQQMQQQMQQQQMQQMQQSQGDEE. The segment covering 111–124 has biased composition (acidic residues); that stretch reads TQEEVDELESESQE. The segment covering 125 to 152 has biased composition (low complexity); it reads LEQQAQQMQQQMQQQQMQQMQQSQGDEE.

This sequence belongs to the prefoldin alpha subunit family. Heterohexamer of two alpha and four beta subunits.

The protein resides in the cytoplasm. Its function is as follows. Molecular chaperone capable of stabilizing a range of proteins. Seems to fulfill an ATP-independent, HSP70-like function in archaeal de novo protein folding. The polypeptide is Prefoldin subunit alpha (Halorubrum lacusprofundi (strain ATCC 49239 / DSM 5036 / JCM 8891 / ACAM 34)).